The following is a 160-amino-acid chain: Adenosine 5'-monophosphoramidase HINT3 (160 aa).

Residues 24-132 form the HIT domain; the sequence is IFCTIAKGDD…LAPYSQLYKW (109 aa). AMP-binding positions include 50-51 and 119-121; these read DI and HLH. The Histidine triad motif signature appears at 117–121; that stretch reads HLHLH. Residue H119 is the Tele-AMP-histidine intermediate of the active site.

The protein belongs to the HINT family. In terms of assembly, forms dimers to octamers and even larger oligomer.

It localises to the cytoplasm. Its subcellular location is the nucleus. It carries out the reaction adenosine 5'-phosphoramidate + H2O = AMP + NH4(+). Its function is as follows. Exhibits adenosine 5'-monophosphoramidase activity, hydrolyzing purine nucleotide phosphoramidates with a single phosphate group such as adenosine 5'monophosphoramidate (AMP-NH2) to yield AMP and NH2. Hydrolyzes lysyl-AMP (AMP-N-epsilon-(N-alpha-acetyl lysine methyl ester)) generated by lysine tRNA ligase. The protein is Adenosine 5'-monophosphoramidase HINT3 (hint3) of Danio rerio (Zebrafish).